Reading from the N-terminus, the 353-residue chain is Peroxidase 34 (353 aa).

A signal peptide spans 1-30 (MHFSSSSTSSTWTILITLGCLMLHASLSAA). Gln-31 is subject to Pyrrolidone carboxylic acid. Cystine bridges form between Cys-41-Cys-121, Cys-74-Cys-79, Cys-127-Cys-331, and Cys-207-Cys-239. An N-linked (GlcNAc...) asparagine glycan is attached at Asn-43. His-72 functions as the Proton acceptor in the catalytic mechanism. Asp-73, Val-76, Gly-78, Asp-80, and Ser-82 together coordinate Ca(2+). The N-linked (GlcNAc...) asparagine glycan is linked to Asn-87. Residue Pro-169 coordinates substrate. His-200 lines the heme b pocket. Thr-201 provides a ligand contact to Ca(2+). Asn-216, Asn-228, and Asn-244 each carry an N-linked (GlcNAc...) asparagine glycan. Positions 252, 255, and 260 each coordinate Ca(2+). N-linked (GlcNAc...) asparagine glycosylation occurs at Asn-285.

This sequence belongs to the peroxidase family. Classical plant (class III) peroxidase subfamily. Heme b is required as a cofactor. Requires Ca(2+) as cofactor. As to expression, preferentially expressed in roots, but also detected in flowers, leaves and stems.

It localises to the secreted. The protein resides in the vacuole. The catalysed reaction is 2 a phenolic donor + H2O2 = 2 a phenolic radical donor + 2 H2O. Functionally, removal of H(2)O(2), oxidation of toxic reductants, biosynthesis and degradation of lignin, suberization, auxin catabolism, response to environmental stresses such as wounding, pathogen attack and oxidative stress. These functions might be dependent on each isozyme/isoform in each plant tissue. Its function is as follows. May be implicated in the systemic acquired resistance response via the salicylic acid signal transduction pathway. Exhibits a Ca(2+)-pectate binding affinity which could be interpreted in vivo as a specificity to interact with the pectic structure of the cell wall. In Arabidopsis thaliana (Mouse-ear cress), this protein is Peroxidase 34 (PER34).